A 229-amino-acid chain; its full sequence is HTH-type transcriptional regulator HbdR (229 aa).

Positions 20 to 80 (EERRHQIISA…LTLKNVLDTY (61 aa)) constitute an HTH tetR-type domain. Residues 43–62 (TILQIAREAKVSTGLIYQYF) constitute a DNA-binding region (H-T-H motif).

Homodimer in solution.

Its activity is regulated as follows. Activity is regulated by the effector molecules 3-hydroxybenzoyl-CoA and benzoyl-CoA, which bind to HbdR, alleviating its repression on the three target promoters and inducing the expression of the hbd genes. Its function is as follows. Transcriptional regulator that controls the expression of the hbd cluster, which contains three catabolic operons and is responsible for the anaerobic degradation of 3-hydroxybenzoate. HbdR suppresses the activity of the three catabolic promoters (PhbdN, PhbdE and PhbdH) by binding to a conserved palindromic operator box. In addition, it slightly increases activity of its own promoter (PhbdR). The HbdR-mediated repression of hbd genes may play a crucial biological role in maintaining requisite hydroxybenzoate levels in the cell. The chain is HTH-type transcriptional regulator HbdR from Aromatoleum sp. (strain CIB) (Azoarcus sp. (strain CIB)).